We begin with the raw amino-acid sequence, 1076 residues long: Nuclear factor of activated T-cells, cytoplasmic 3 (1076 aa).

Residue T2 is modified to N-acetylthreonine. The tract at residues 110–115 (PSIQIT) is calcineurin-binding. Positions 206-307 (LGSPLTSPGG…PGHSPRGSVT (102 aa)) are disordered. 2 repeat units span residues 208 to 224 (SPLTSPGGSPGGCPGEE) and 237 to 253 (SPRQSPCHSPRSSITDE). Positions 208–309 (SPLTSPGGSP…HSPRGSVTED (102 aa)) are 3 X SP repeats. A compositionally biased stretch (polar residues) spans 237-254 (SPRQSPCHSPRSSITDEN). A compositionally biased stretch (low complexity) spans 257–271 (SPRPASGPSSRPTSP). A Nuclear localization signal motif is present at residues 274–276 (KRR). Repeat 3 spans residues 293–309 (SPVPSPGHSPRGSVTED). S345 bears the Phosphoserine mark. Residues 359–390 (CSDDQGSLSPSRETSVDDGLGSQYPLKKDSSG) form a disordered region. Residues 362 to 371 (DQGSLSPSRE) are compositionally biased toward polar residues. Residue S373 is modified to Phosphoserine. An RHD domain is found at 416–597 (SSLPPLDWPL…IPVECSQRSA (182 aa)). The DNA-binding element occupies 445-452 (RAHYETEG). The Nuclear localization signal motif lies at 687–689 (KRK). 2 disordered regions span residues 700 to 744 (PVLM…ALSA) and 863 to 987 (GHLL…GGLS). Residues 713-722 (LSSVPSLPVP) show a composition bias toward low complexity. Composition is skewed to polar residues over residues 724 to 734 (SAQTQRPSSDT) and 888 to 911 (SAGQRSLSSPVAAQVTGQPSSHLQ). Composition is skewed to low complexity over residues 917–939 (PSHPGSATAASPAASHALSSSPI) and 946–965 (QLQSMPYQSPSSGTASSPSP). Residues 970-981 (HSGQHSTQAQST) are compositionally biased toward polar residues. Residues 1032–1041 (TLDDVNEIIG) carry the Nuclear export signal motif. Positions 1049-1076 (VSQGPEVIRDAPLPGPESPDVMSSNSAQ) are disordered. A Phosphoserine modification is found at S1066.

NFATC proteins bind to DNA as monomers. Member of the multicomponent NFATC transcription complex that consists of at least two components, a pre-existing cytoplasmic component NFATC2 and an inducible nuclear component NFATC1. Other members such as NFATC4, or members of the activating protein-1 family, MAF, GATA4 and Cbp/p300 can also bind the complex. Component of a promoter-binding complex composed of STAT3, NFATC3 and NFATC4; complex formation is enhanced by calcineurin. Interacts with TRIM17; this interaction prevents NFATC3 nuclear localization. Interacts with and ubiquitinated by STUB1/CHIP; HSPA1A/HSP70 is required as a co-chaperone. Post-translationally, phosphorylated by NFATC-kinase; dephosphorylated by calcineurin. Ubiquitinated by STUB1/CHIP, leading to proteasomal degradation. In terms of tissue distribution, expressed in cardiomyocytes (at protein level).

It is found in the cytoplasm. It localises to the nucleus. Its function is as follows. Acts as a regulator of transcriptional activation. Binds to the TNFSF11/RANKL promoter region and promotes TNFSF11 transcription. Binding to the TNFSF11 promoter region is increased by high levels of Ca(2+) which induce NFATC3 expression and may lead to regulation of TNFSF11 expression in osteoblasts. Plays a role in promoting mesenteric arterial wall remodeling in response to the intermittent hypoxia-induced increase in EDN1 and ROCK signaling. As a result NFATC3 colocalizes with F-actin filaments, translocates to the nucleus and promotes transcription of the smooth muscle hypertrophy and differentiation marker ACTA2. Promotes lipopolysaccharide-induced apoptosis and hypertrophy in cardiomyocytes. Following JAK/STAT signaling activation and as part of a complex with NFATC4 and STAT3, binds to the alpha-beta E4 promoter region of CRYAB and activates transcription in cardiomyocytes. In conjunction with NFATC4, involved in embryonic heart development via maintenance of cardiomyocyte survival, proliferation and differentiation. Plays a role in the inducible expression of cytokine genes in T-cells, especially in the induction of the IL-2. Required for thymocyte maturation during DN3 to DN4 transition and during positive selection. Positively regulates macrophage-derived polymicrobial clearance, via binding to the promoter region and promoting transcription of NOS2 resulting in subsequent generation of nitric oxide. Involved in Ca(2+)-mediated transcriptional responses upon Ca(2+) influx via ORAI1 CRAC channels. This is Nuclear factor of activated T-cells, cytoplasmic 3 from Rattus norvegicus (Rat).